The primary structure comprises 120 residues: Cell division protein FtsL (120 aa).

Residues 1-36 (MSNLAVKYKQQAQEEVQIQTPPQQMVQPKAKAKITR) lie on the Cytoplasmic side of the membrane. Residues 37 to 57 (IEKLLYVAFIGFLLYACVAFI) form a helical membrane-spanning segment. Topologically, residues 58–120 (GNKAGLYQVN…INANNVKGLK (63 aa)) are extracellular.

The protein belongs to the FtsL family.

Its subcellular location is the cell membrane. Its function is as follows. Essential cell division protein. This is Cell division protein FtsL from Bacillus anthracis.